Here is a 595-residue protein sequence, read N- to C-terminus: Coagulation factor XII (595 aa).

The signal sequence occupies residues M1 to S19. One can recognise a Fibronectin type-II domain in the interval V41 to E89. Intrachain disulfides connect C46-C72, C60-C87, C97-C109, C103-C118, C120-C129, C134-C162, C160-C169, C177-C188, C182-C197, C199-C208, C216-C294, C237-C276, and C265-C289. The region spanning V93–Q130 is the EGF-like 1 domain. O-linked (Fuc) threonine glycosylation is present at T108. One can recognise a Fibronectin type-I domain in the interval E132–L172. In terms of domain architecture, EGF-like 2 spans T173–D209. A Kringle domain is found at T215–C294. N248 is a glycosylation site (N-linked (GlcNAc...) asparagine). T298 is a glycosylation site (O-linked (GalNAc...) threonine). The interval P302–V332 is disordered. S307 is a glycosylation site (O-linked (GalNAc...) serine). Over residues L318–V332 the composition is skewed to polar residues. T326 is a glycosylation site (O-linked (GalNAc...) threonine). 7 disulfide bridges follow: C340–C466, C378–C394, C386–C455, C417–C420, C480–C549, C512–C528, and C539–C570. Positions V354–A594 constitute a Peptidase S1 domain. Residue H393 is the Charge relay system of the active site. N414 carries N-linked (GlcNAc...) asparagine glycosylation. Catalysis depends on D442, which acts as the Charge relay system. Catalysis depends on S543, which acts as the Charge relay system.

This sequence belongs to the peptidase S1 family. In terms of assembly, interacts with HRG; the interaction, which is enhanced in the presence of zinc ions and inhibited by heparin-binding, inhibits factor XII autoactivation and contact-initiated coagulation. In terms of processing, O- and N-glycosylated.

It localises to the secreted. It carries out the reaction Selective cleavage of Arg-|-Ile bonds in factor VII to form factor VIIa and factor XI to form factor XIa.. With respect to regulation, activity is promoted in the presence of negatively charged surfaces. In terms of biological role, factor XII is a serum glycoprotein that participates in the initiation of blood coagulation, fibrinolysis, and the generation of bradykinin and angiotensin. Prekallikrein is cleaved by factor XII to form kallikrein, which then cleaves factor XII first to alpha-factor XIIa and then trypsin cleaves it to beta-factor XIIa. Alpha-factor XIIa activates factor XI to factor XIa. The polypeptide is Coagulation factor XII (F12) (Rattus norvegicus (Rat)).